The chain runs to 457 residues: Tubulin beta chain (457 aa).

Gln11, Glu69, Ser138, Gly142, Thr143, Gly144, Asn204, and Asn226 together coordinate GTP. Residue Glu69 coordinates Mg(2+). Ser278 and Ser280 each carry phosphoserine. The interval 423-457 (QQYQEATVEDDEEVDENGDFGAPQNQDEPITENFE) is disordered. Residues 429–440 (TVEDDEEVDENG) show a composition bias toward acidic residues.

This sequence belongs to the tubulin family. Dimer of alpha and beta chains. A typical microtubule is a hollow water-filled tube with an outer diameter of 25 nm and an inner diameter of 15 nM. Alpha-beta heterodimers associate head-to-tail to form protofilaments running lengthwise along the microtubule wall with the beta-tubulin subunit facing the microtubule plus end conferring a structural polarity. Microtubules usually have 13 protofilaments but different protofilament numbers can be found in some organisms and specialized cells. Mg(2+) is required as a cofactor.

It localises to the cytoplasm. The protein resides in the cytoskeleton. Its function is as follows. Tubulin is the major constituent of microtubules, a cylinder consisting of laterally associated linear protofilaments composed of alpha- and beta-tubulin heterodimers. Microtubules grow by the addition of GTP-tubulin dimers to the microtubule end, where a stabilizing cap forms. Below the cap, tubulin dimers are in GDP-bound state, owing to GTPase activity of alpha-tubulin. In Saccharomyces cerevisiae (strain ATCC 204508 / S288c) (Baker's yeast), this protein is Tubulin beta chain (TUB2).